The chain runs to 277 residues: uncharacterized protein (277 aa).

Disordered stretches follow at residues 1 to 103 (PPLR…LEDP) and 254 to 277 (PSPS…SPPR). The segment covering 48–65 (RRNDTGKDRGTHRQRAET) has biased composition (basic and acidic residues). Polar residues predominate over residues 66–77 (PSRSPVPTTNTV). Residues 82–91 (PAVRRQRRTQ) show a composition bias toward basic residues.

This is an uncharacterized protein from Homo sapiens (Human).